Consider the following 173-residue polypeptide: Nicotinamide-nucleotide adenylyltransferase (173 aa).

This sequence belongs to the archaeal NMN adenylyltransferase family.

The protein resides in the cytoplasm. It catalyses the reaction beta-nicotinamide D-ribonucleotide + ATP + H(+) = diphosphate + NAD(+). Its pathway is cofactor biosynthesis; NAD(+) biosynthesis; NAD(+) from nicotinamide D-ribonucleotide: step 1/1. The sequence is that of Nicotinamide-nucleotide adenylyltransferase from Methanosarcina mazei (strain ATCC BAA-159 / DSM 3647 / Goe1 / Go1 / JCM 11833 / OCM 88) (Methanosarcina frisia).